We begin with the raw amino-acid sequence, 381 residues long: Lipopolysaccharide 1,2-N-acetylglucosaminetransferase (381 aa).

It belongs to the glycosyltransferase group 1 family. Glycosyltransferase 4 subfamily.

It is found in the cell inner membrane. The catalysed reaction is UDP-N-acetyl-alpha-D-glucosamine + [lipopolysaccharide] = UDP + N-acetyl-alpha-D-glucosaminyl-[lipopolysaccharide].. It participates in bacterial outer membrane biogenesis; LPS core biosynthesis. Its function is as follows. Transferase involved in the biosynthesis of the core oligosaccharide region of lipopolysaccharide (LPS). Catalyzes the addition of the terminal N-acetyl-D-glucosamine (GlcNAc) group to the outer-core glucose II, the last step of the lipid A-core oligosaccharide biosynthesis. The sequence is that of Lipopolysaccharide 1,2-N-acetylglucosaminetransferase from Salmonella typhimurium (strain LT2 / SGSC1412 / ATCC 700720).